We begin with the raw amino-acid sequence, 180 residues long: Oligoribonuclease (180 aa).

The Exonuclease domain occupies 7-170 (LIWIDLEMTG…DDIRDSINEL (164 aa)). Residue tyrosine 128 is part of the active site.

It belongs to the oligoribonuclease family.

The protein localises to the cytoplasm. Its function is as follows. 3'-to-5' exoribonuclease specific for small oligoribonucleotides. This is Oligoribonuclease from Marinobacter nauticus (strain ATCC 700491 / DSM 11845 / VT8) (Marinobacter aquaeolei).